Here is a 145-residue protein sequence, read N- to C-terminus: Large-conductance mechanosensitive channel (145 aa).

3 helical membrane-spanning segments follow: residues 14-34 (VMDL…VKSL), 38-58 (LIMP…YFLP), and 81-101 (GSFL…FLMV).

This sequence belongs to the MscL family. As to quaternary structure, homopentamer.

The protein resides in the cell inner membrane. In terms of biological role, channel that opens in response to stretch forces in the membrane lipid bilayer. May participate in the regulation of osmotic pressure changes within the cell. The protein is Large-conductance mechanosensitive channel of Rhizobium leguminosarum bv. trifolii (strain WSM2304).